We begin with the raw amino-acid sequence, 243 residues long: 1-(5-phosphoribosyl)-5-[(5-phosphoribosylamino)methylideneamino] imidazole-4-carboxamide isomerase (243 aa).

D8 serves as the catalytic Proton acceptor. D128 acts as the Proton donor in catalysis.

This sequence belongs to the HisA/HisF family.

It localises to the cytoplasm. The catalysed reaction is 1-(5-phospho-beta-D-ribosyl)-5-[(5-phospho-beta-D-ribosylamino)methylideneamino]imidazole-4-carboxamide = 5-[(5-phospho-1-deoxy-D-ribulos-1-ylimino)methylamino]-1-(5-phospho-beta-D-ribosyl)imidazole-4-carboxamide. The protein operates within amino-acid biosynthesis; L-histidine biosynthesis; L-histidine from 5-phospho-alpha-D-ribose 1-diphosphate: step 4/9. The protein is 1-(5-phosphoribosyl)-5-[(5-phosphoribosylamino)methylideneamino] imidazole-4-carboxamide isomerase of Opitutus terrae (strain DSM 11246 / JCM 15787 / PB90-1).